The chain runs to 266 residues: Zinc transporter ZupT (266 aa).

8 helical membrane-spanning segments follow: residues 8 to 28 (LLLT…ALVV), 35 to 55 (FLTL…FVEL), 70 to 90 (QAAA…IWAI), 123 to 143 (GLFT…AVFF), 152 to 172 (GIVI…AIAV), 185 to 205 (FTYS…GFAI), 209 to 229 (WLSP…MVYI), and 246 to 266 (LAIS…LLLA). Positions 134 and 137 each coordinate Fe(2+). Residues Glu-137 and His-162 each contribute to the Zn(2+) site. Residues Asn-163, Glu-166, and Glu-195 each contribute to the Fe(2+) site. Glu-166 contributes to the Zn(2+) binding site.

The protein belongs to the ZIP transporter (TC 2.A.5) family. ZupT subfamily.

It localises to the cell membrane. The enzyme catalyses Zn(2+)(in) = Zn(2+)(out). Mediates zinc uptake. May also transport other divalent cations. The protein is Zinc transporter ZupT of Chlorobium phaeovibrioides (strain DSM 265 / 1930) (Prosthecochloris vibrioformis (strain DSM 265)).